Reading from the N-terminus, the 314-residue chain is MPTVNHSGTSHTVFHLLGIPGLQDQHMWISIPFFISYVTALLGNSLLIFIILTKRSLHEPMYLFLCMLAGADIVLSTCTIPQALAIFWFRAGDISLDRCITQLFFIHSTFISESGILLVMAFDHYIAICYPLRYTTILTNALIKKICVTVSLRSYGTIFPIIFLLKRLTFCQNNIIPHTFCEHIGLAKYACNDIRINIWYGFSILMSTVVLDVVLIFISYMLILHAVFHMPSPDACHKALNTFGSHVCIIILFYGSGIFTILTQRFGRHIPPCIHIPLANVCILAPPMLNPIIYGIKTKQIQEQVVQFLFIKQK.

The Extracellular segment spans residues 1–27 (MPTVNHSGTSHTVFHLLGIPGLQDQHM). Asparagine 5 carries N-linked (GlcNAc...) asparagine glycosylation. Residues 28-48 (WISIPFFISYVTALLGNSLLI) traverse the membrane as a helical segment. Residues 49-56 (FIILTKRS) lie on the Cytoplasmic side of the membrane. Residues 57–77 (LHEPMYLFLCMLAGADIVLST) form a helical membrane-spanning segment. Over 78–101 (CTIPQALAIFWFRAGDISLDRCIT) the chain is Extracellular. A disulfide bond links cysteine 99 and cysteine 191. The helical transmembrane segment at 102-122 (QLFFIHSTFISESGILLVMAF) threads the bilayer. Residues 123–141 (DHYIAICYPLRYTTILTNA) lie on the Cytoplasmic side of the membrane. Residues 142 to 162 (LIKKICVTVSLRSYGTIFPII) traverse the membrane as a helical segment. Residues 163–198 (FLLKRLTFCQNNIIPHTFCEHIGLAKYACNDIRINI) are Extracellular-facing. Residues 199-219 (WYGFSILMSTVVLDVVLIFIS) form a helical membrane-spanning segment. Residues 220–239 (YMLILHAVFHMPSPDACHKA) lie on the Cytoplasmic side of the membrane. Residues 240–260 (LNTFGSHVCIIILFYGSGIFT) form a helical membrane-spanning segment. Residues 261-275 (ILTQRFGRHIPPCIH) are Extracellular-facing. Residues 276–296 (IPLANVCILAPPMLNPIIYGI) form a helical membrane-spanning segment. The Cytoplasmic portion of the chain corresponds to 297–314 (KTKQIQEQVVQFLFIKQK).

It belongs to the G-protein coupled receptor 1 family.

It localises to the cell membrane. Odorant receptor. This chain is Olfactory receptor 52B4 (OR52B4), found in Homo sapiens (Human).